The following is a 135-amino-acid chain: Translation initiation factor 2 subunit beta (135 aa).

It belongs to the eIF-2-beta/eIF-5 family. Heterotrimer composed of an alpha, a beta and a gamma chain.

Functionally, eIF-2 functions in the early steps of protein synthesis by forming a ternary complex with GTP and initiator tRNA. This Methanothermobacter thermautotrophicus (strain ATCC 29096 / DSM 1053 / JCM 10044 / NBRC 100330 / Delta H) (Methanobacterium thermoautotrophicum) protein is Translation initiation factor 2 subunit beta (eif2b).